The chain runs to 102 residues: RNA-binding protein Hfq (102 aa).

The 60-residue stretch at 9–68 (DPFLNALRRERVPVSIYLVNGIKLQGQIESFDQFVILLKNTVSQMVYKHAISTVVPSRPV) folds into the Sm domain. Residues 63–102 (VPSRPVSHHSNNAGGGTSSNYHHGSSAQGTSAQQDSEETE) form a disordered region. The span at 70-96 (HHSNNAGGGTSSNYHHGSSAQGTSAQQ) shows a compositional bias: polar residues.

Belongs to the Hfq family. Homohexamer.

RNA chaperone that binds small regulatory RNA (sRNAs) and mRNAs to facilitate mRNA translational regulation in response to envelope stress, environmental stress and changes in metabolite concentrations. Also binds with high specificity to tRNAs. In Citrobacter koseri (strain ATCC BAA-895 / CDC 4225-83 / SGSC4696), this protein is RNA-binding protein Hfq.